We begin with the raw amino-acid sequence, 157 residues long: MPRPTKFRRVEFFPENNYFVPWGKPKCEMHEVVLKVEELEAMRLKDIEELNQEQCAEKMEISRQTFQNIIDSARKKVAIALTEGKAIKISGGHYTTKLCKLKCIDCGEIYEINYEQDRHLCPNCGSEKVICNKKADFCRRWCKGQNRKEQYEESKNK.

It belongs to the UPF0251 family.

This Clostridium botulinum (strain Loch Maree / Type A3) protein is UPF0251 protein CLK_0815.